We begin with the raw amino-acid sequence, 127 residues long: MSIPADLLYTDTHEWVRIEGDEAVIGITQFAQEQLGDLTFVDLPAVGDTLATGQEMGSVESVKAASELYSPLAGTVSAVNDALSGAPELVNQSPYTDGWMVRVKLSATPEGLLSAADYEAVVAREAH.

Positions 22 to 104 (EAVIGITQFA…YTDGWMVRVK (83 aa)) constitute a Lipoyl-binding domain. At Lys-63 the chain carries N6-lipoyllysine.

Belongs to the GcvH family. The glycine cleavage system is composed of four proteins: P, T, L and H. The cofactor is (R)-lipoate.

In terms of biological role, the glycine cleavage system catalyzes the degradation of glycine. The H protein shuttles the methylamine group of glycine from the P protein to the T protein. In Nitratidesulfovibrio vulgaris (strain DSM 19637 / Miyazaki F) (Desulfovibrio vulgaris), this protein is Glycine cleavage system H protein.